The sequence spans 319 residues: Homoserine O-acetyltransferase (319 aa).

The Acyl-thioester intermediate role is filled by Cys-142. Residues Lys-163 and Ser-192 each coordinate substrate. The active-site Proton acceptor is His-235. The active site involves Glu-237. Arg-249 is a substrate binding site.

This sequence belongs to the MetA family.

Its subcellular location is the cytoplasm. It catalyses the reaction L-homoserine + acetyl-CoA = O-acetyl-L-homoserine + CoA. It participates in amino-acid biosynthesis; L-methionine biosynthesis via de novo pathway; O-acetyl-L-homoserine from L-homoserine: step 1/1. Its function is as follows. Transfers an acetyl group from acetyl-CoA to L-homoserine, forming acetyl-L-homoserine. The polypeptide is Homoserine O-acetyltransferase (Lactococcus lactis subsp. cremoris (strain MG1363)).